The primary structure comprises 313 residues: N-acetyl-gamma-glutamyl-phosphate reductase (313 aa).

Residue Cys117 is part of the active site.

The protein belongs to the NAGSA dehydrogenase family. Type 2 subfamily.

The protein localises to the cytoplasm. It catalyses the reaction N-acetyl-L-glutamate 5-semialdehyde + phosphate + NADP(+) = N-acetyl-L-glutamyl 5-phosphate + NADPH + H(+). It participates in amino-acid biosynthesis; L-arginine biosynthesis; N(2)-acetyl-L-ornithine from L-glutamate: step 3/4. In terms of biological role, catalyzes the NADPH-dependent reduction of N-acetyl-5-glutamyl phosphate to yield N-acetyl-L-glutamate 5-semialdehyde. The polypeptide is N-acetyl-gamma-glutamyl-phosphate reductase (Burkholderia cenocepacia (strain HI2424)).